Consider the following 186-residue polypeptide: Cytochrome c oxidase polypeptide 5, mitochondrial (186 aa).

Residues M1 to N20 constitute a mitochondrion transit peptide. Topologically, residues A21–Q107 are mitochondrial matrix. Residues K108–I128 traverse the membrane as a helical segment. Residues R129–K186 are Mitochondrial intermembrane-facing. The tract at residues E149 to K186 is disordered.

This sequence belongs to the cytochrome c oxidase IV family. As to quaternary structure, component of the cytochrome c oxidase (complex IV, CIV), a multisubunit enzyme composed of a catalytic core of 3 subunits and seevral supernumerary subunits. The complex exists as a monomer or a dimer and forms supercomplexes (SCs) in the inner mitochondrial membrane with ubiquinol-cytochrome c oxidoreductase (cytochrome b-c1 complex, complex III, CIII).

The protein resides in the mitochondrion inner membrane. It participates in energy metabolism; oxidative phosphorylation. Functionally, component of the cytochrome c oxidase, the last enzyme in the mitochondrial electron transport chain which drives oxidative phosphorylation. The respiratory chain contains 3 multisubunit complexes succinate dehydrogenase (complex II, CII), ubiquinol-cytochrome c oxidoreductase (cytochrome b-c1 complex, complex III, CIII) and cytochrome c oxidase (complex IV, CIV), that cooperate to transfer electrons derived from NADH and succinate to molecular oxygen, creating an electrochemical gradient over the inner membrane that drives transmembrane transport and the ATP synthase. Cytochrome c oxidase is the component of the respiratory chain that catalyzes the reduction of oxygen to water. Electrons originating from reduced cytochrome c in the intermembrane space (IMS) are transferred via the dinuclear copper A center (CU(A)) of subunit 2 and heme A of subunit 1 to the active site in subunit 1, a binuclear center (BNC) formed by heme A3 and copper B (CU(B)). The BNC reduces molecular oxygen to 2 water molecules using 4 electrons from cytochrome c in the IMS and 4 protons from the mitochondrial matrix. This chain is Cytochrome c oxidase polypeptide 5, mitochondrial (cox5), found in Schizosaccharomyces pombe (strain 972 / ATCC 24843) (Fission yeast).